Consider the following 451-residue polypeptide: Heme sensor protein HssS (451 aa).

2 consecutive transmembrane segments (helical) span residues 9 to 29 and 164 to 184; these read IAIY…LFTN and IFLA…VIAS. Positions 186-238 constitute an HAMP domain; it reads YSIIKPVTALKNATTRIMKGDFSTPIKQTRHDEIGTLQSRFNTMRQNLGQVDQ. In terms of domain architecture, Histidine kinase spans 246-451; the sequence is NVSHEIKTPL…KTQFIVKLFI (206 aa). A Phosphohistidine; by autocatalysis modification is found at His249.

Post-translationally, autophosphorylated.

Its subcellular location is the cell membrane. It catalyses the reaction ATP + protein L-histidine = ADP + protein N-phospho-L-histidine.. Its function is as follows. Member of the two-component regulatory system HssS/HssR involved in intracellular heme homeostasis and tempering of staphylococcal virulence. HssS functions as a heme sensor histidine kinase which is autophosphorylated at a histidine residue and transfers its phosphate group to an aspartate residue of HssR. HssR/HssS activates the expression of HrtAB, an efflux pump, in response to extracellular heme, hemin, hemoglobin or blood. In Staphylococcus epidermidis (strain ATCC 12228 / FDA PCI 1200), this protein is Heme sensor protein HssS (hssS).